The primary structure comprises 207 residues: Ras-related protein Rab7 (207 aa).

Residues 15-22, 34-40, 63-67, 125-128, and 156-157 each bind GTP; these read GDSSVGKT, SNQYKAT, DTAGQ, NKVD, and AK. An Effector region motif is present at residues 37–45; the sequence is YKATIGADF. Residues Cys-205 and Cys-207 are each lipidated (S-geranylgeranyl cysteine).

This sequence belongs to the small GTPase superfamily. Rab family. In terms of tissue distribution, expressed in eye (at protein level).

The protein resides in the early endosome membrane. Its subcellular location is the late endosome membrane. It localises to the lysosome membrane. It is found in the cytoplasmic vesicle. The protein localises to the autophagosome membrane. The protein resides in the autolysosome membrane. Its subcellular location is the presynapse. It localises to the perikaryon. It carries out the reaction GTP + H2O = GDP + phosphate + H(+). In terms of biological role, small GTPase which cycles between active GTP-bound and inactive GDP-bound states. In its active state, binds to a variety of effector proteins playing a key role in the regulation of endo-lysosomal trafficking. Involved in microtubule minus and plus end-directed endosomal migration and positioning, and endosome-lysosome transport through different protein-protein interaction cascades. Governs early-to-late endosomal to lysosomal maturation. Controls endocytic cargo sorting towards the late endosome facilitating its eventual endolysosomal-mediated degradation. Together with Rab2 involved in promoting fusion of autophagosomes and endosomes with lysosomes probably through recruitment of the HOPS tethering complex. Involved in biosynthetic transport to lysosomes. Involved in establishing morphogen concentration gradients, for example of the TGF-beta homolog dpp/decapentaplegic, during pattern formation and organogenesis. Together with the Mon1-Ccz1 complex, required for autolysosome formation in fat cells and autophagic degradation during starvation-induced basal and developmental autophagy. Together with Mon1, regulates levels of postsynaptic glutamate receptor GluRIIA in the neuromuscular junction (NMJ) presynapse. Required for autophagocytosis-dependent remodeling of myofibrils and transverse-tubules (T-tubules) during metamorphosis. Involved in intracellular trafficking of the carbohydrate transporter Tret1 in glial cells of the blood brain barrier, influencing its subcellular localization and protein levels. In Drosophila melanogaster (Fruit fly), this protein is Ras-related protein Rab7.